A 123-amino-acid chain; its full sequence is Small ribosomal subunit protein uS13 (123 aa).

Residues 96–123 (LPVRGQRTKTNARTRKGPKKTVGARRKK) are disordered.

It belongs to the universal ribosomal protein uS13 family. Part of the 30S ribosomal subunit. Forms a loose heterodimer with protein S19. Forms two bridges to the 50S subunit in the 70S ribosome.

Its function is as follows. Located at the top of the head of the 30S subunit, it contacts several helices of the 16S rRNA. In the 70S ribosome it contacts the 23S rRNA (bridge B1a) and protein L5 of the 50S subunit (bridge B1b), connecting the 2 subunits; these bridges are implicated in subunit movement. Contacts the tRNAs in the A and P-sites. This Desulforamulus reducens (strain ATCC BAA-1160 / DSM 100696 / MI-1) (Desulfotomaculum reducens) protein is Small ribosomal subunit protein uS13.